Consider the following 590-residue polypeptide: RNA-binding protein 47 (590 aa).

Positions 1–21 (MTAEDSTTAMNSDPTVGSSTK) are enriched in polar residues. Positions 1 to 26 (MTAEDSTTAMNSDPTVGSSTKVPEGV) are disordered. RRM domains are found at residues 71–149 (CEVF…CSVD), 151–233 (CRLF…WAEP), and 246–318 (KILY…LAKP). Arginine 396 and arginine 407 each carry asymmetric dimethylarginine; alternate. Residues arginine 396 and arginine 407 each carry the omega-N-methylarginine; alternate modification.

Belongs to the RRM RBM47 family. Homodimer. Interacts with A1CF. Interacts with APOBEC1; form an mRNA editing complex. Interacts with RBPMS.

The protein resides in the nucleus. The protein localises to the cytoplasm. Functionally, single-stranded RNA-binding protein that functions in a variety of RNA processes, including alternative splicing, RNA stabilization, and RNA editing. Functions as an enzyme-substrate adapter for the cytidine deaminase APOBEC1. With APOBEC1 forms an mRNA editing complex involved into cytidine to uridine editing of a variety of mRNA molecules. Through the binding of their 3'UTR, also stabilizes a variety of mRNAs and regulates the expression of genes such as the interferon alpha/beta receptor and interleukin-10. Also involved in the alternative splicing of several genes including TJP1. Binds the pre-mRNA (U)GCAUG consensus sequences in downstream intronic regions of alternative exons regulating their exclusion and inclusion into mRNAs. Independently of its RNA-binding activity, could negatively regulate MAVS by promoting its lysosomal degradation. This chain is RNA-binding protein 47, found in Rattus norvegicus (Rat).